Consider the following 102-residue polypeptide: Large ribosomal subunit protein bL21 (102 aa).

Belongs to the bacterial ribosomal protein bL21 family. In terms of assembly, part of the 50S ribosomal subunit. Contacts protein L20.

Its function is as follows. This protein binds to 23S rRNA in the presence of protein L20. This Agathobacter rectalis (strain ATCC 33656 / DSM 3377 / JCM 17463 / KCTC 5835 / VPI 0990) (Eubacterium rectale) protein is Large ribosomal subunit protein bL21.